Here is a 190-residue protein sequence, read N- to C-terminus: B3 domain-containing protein Os02g0764100 (190 aa).

Residues 17-121 (FEKAVTPSDV…KLLFIDCKKN (105 aa)) constitute a DNA-binding region (TF-B3).

It is found in the nucleus. The chain is B3 domain-containing protein Os02g0764100 from Oryza sativa subsp. japonica (Rice).